A 932-amino-acid polypeptide reads, in one-letter code: 2-oxoglutarate dehydrogenase E1 component (932 aa).

Belongs to the alpha-ketoglutarate dehydrogenase family. In terms of assembly, homodimer. Part of the 2-oxoglutarate dehydrogenase (OGDH) complex composed of E1 (2-oxoglutarate dehydrogenase), E2 (dihydrolipoamide succinyltransferase) and E3 (dihydrolipoamide dehydrogenase); the complex contains multiple copies of the three enzymatic components (E1, E2 and E3). Thiamine diphosphate is required as a cofactor.

It carries out the reaction N(6)-[(R)-lipoyl]-L-lysyl-[protein] + 2-oxoglutarate + H(+) = N(6)-[(R)-S(8)-succinyldihydrolipoyl]-L-lysyl-[protein] + CO2. Functionally, E1 component of the 2-oxoglutarate dehydrogenase (OGDH) complex which catalyzes the decarboxylation of 2-oxoglutarate, the first step in the conversion of 2-oxoglutarate to succinyl-CoA and CO(2). This chain is 2-oxoglutarate dehydrogenase E1 component, found in Staphylococcus aureus (strain MW2).